Reading from the N-terminus, the 448-residue chain is Delta(14)-sterol reductase ERG24 (448 aa).

A run of 7 helical transmembrane segments spans residues 18-38 (ISGA…FYLL), 75-95 (CWSA…LLPG), 108-128 (VLNY…LLLA), 157-177 (IIIC…ISFI), 251-271 (VTDS…DGVL), 279-299 (MIDI…LAWV), and 318-338 (NLGW…FYIF). NADP(+)-binding positions include Lys-345, Arg-349, Leu-368, Trp-373, and 380–381 (NY). A helical membrane pass occupies residues 394–414 (PTGFQTPLTYFYVIYFASLLI). Residues Asp-420, 424–428 (CRAKY), and Tyr-435 contribute to the NADP(+) site.

It belongs to the ERG4/ERG24 family.

The protein localises to the endoplasmic reticulum membrane. It catalyses the reaction 4,4-dimethyl-5alpha-cholesta-8,24-dien-3beta-ol + NADP(+) = 4,4-dimethyl-5alpha-cholesta-8,14,24-trien-3beta-ol + NADPH + H(+). Its pathway is steroid biosynthesis; zymosterol biosynthesis; zymosterol from lanosterol: step 2/6. Its function is as follows. C-14 sterol reductase; part of the third module of ergosterol biosynthesis pathway that includes the late steps of the pathway. ERG24 reduces the C14=C15 double bond of 4,4-dimethyl-cholesta-8,14,24-trienol to produce 4,4-dimethyl-cholesta-8,24-dienol. The third module or late pathway involves the ergosterol synthesis itself through consecutive reactions that mainly occur in the endoplasmic reticulum (ER) membrane. Firstly, the squalene synthase ERG9 catalyzes the condensation of 2 farnesyl pyrophosphate moieties to form squalene, which is the precursor of all steroids. Squalene synthase is crucial for balancing the incorporation of farnesyl diphosphate (FPP) into sterol and nonsterol isoprene synthesis. Secondly, the squalene epoxidase ERG1 catalyzes the stereospecific oxidation of squalene to (S)-2,3-epoxysqualene, which is considered to be a rate-limiting enzyme in steroid biosynthesis. Then, the lanosterol synthase ERG7 catalyzes the cyclization of (S)-2,3 oxidosqualene to lanosterol, a reaction that forms the sterol core. In the next steps, lanosterol is transformed to zymosterol through a complex process involving various demethylation, reduction and desaturation reactions. The lanosterol 14-alpha-demethylase ERG11 (also known as CYP51) catalyzes C14-demethylation of lanosterol to produce 4,4'-dimethyl cholesta-8,14,24-triene-3-beta-ol, which is critical for ergosterol biosynthesis. The C-14 reductase ERG24 reduces the C14=C15 double bond of 4,4-dimethyl-cholesta-8,14,24-trienol to produce 4,4-dimethyl-cholesta-8,24-dienol. 4,4-dimethyl-cholesta-8,24-dienol is substrate of the C-4 demethylation complex ERG25-ERG26-ERG27 in which ERG25 catalyzes the three-step monooxygenation required for the demethylation of 4,4-dimethyl and 4alpha-methylsterols, ERG26 catalyzes the oxidative decarboxylation that results in a reduction of the 3-beta-hydroxy group at the C-3 carbon to an oxo group, and ERG27 is responsible for the reduction of the keto group on the C-3. ERG28 has a role as a scaffold to help anchor ERG25, ERG26 and ERG27 to the endoplasmic reticulum and ERG29 regulates the activity of the iron-containing C4-methylsterol oxidase ERG25. Then, the sterol 24-C-methyltransferase ERG6 catalyzes the methyl transfer from S-adenosyl-methionine to the C-24 of zymosterol to form fecosterol. The C-8 sterol isomerase ERG2 catalyzes the reaction which results in unsaturation at C-7 in the B ring of sterols and thus converts fecosterol to episterol. The sterol-C5-desaturase ERG3 then catalyzes the introduction of a C-5 double bond in the B ring to produce 5-dehydroepisterol. The C-22 sterol desaturase ERG5 further converts 5-dehydroepisterol into ergosta-5,7,22,24(28)-tetraen-3beta-ol by forming the C-22(23) double bond in the sterol side chain. Finally, ergosta-5,7,22,24(28)-tetraen-3beta-ol is substrate of the C-24(28) sterol reductase ERG4 to produce ergosterol. In Candida albicans (strain SC5314 / ATCC MYA-2876) (Yeast), this protein is Delta(14)-sterol reductase ERG24.